The sequence spans 37 residues: Potassium channel toxin alpha-KTx 11.2 (37 aa).

3 disulfide bridges follow: Cys8–Cys27, Cys13–Cys33, and Cys17–Cys35.

This sequence belongs to the short scorpion toxin superfamily. Potassium channel inhibitor family. Alpha-KTx 11 subfamily. As to expression, expressed by the venom gland.

Its subcellular location is the secreted. Binds and inhibits voltage-sensitive potassium channels. Inhibits the vertebrate potassium channel Kv1.1/KCNA1 with low affinity. The polypeptide is Potassium channel toxin alpha-KTx 11.2 (Parabuthus villosus (Black hairy thick-tailed scorpion)).